Consider the following 363-residue polypeptide: 3-isopropylmalate dehydrogenase (363 aa).

79 to 92 (GPKWEHLPPNDQPE) contacts NAD(+). 4 residues coordinate substrate: Arg100, Arg110, Arg139, and Asp228. Residues Asp228, Asp252, and Asp256 each coordinate Mg(2+). 286 to 298 (GSAPDIAGKNIAN) contacts NAD(+).

The protein belongs to the isocitrate and isopropylmalate dehydrogenases family. LeuB type 1 subfamily. As to quaternary structure, homodimer. Mg(2+) is required as a cofactor. Requires Mn(2+) as cofactor.

Its subcellular location is the cytoplasm. The catalysed reaction is (2R,3S)-3-isopropylmalate + NAD(+) = 4-methyl-2-oxopentanoate + CO2 + NADH. It functions in the pathway amino-acid biosynthesis; L-leucine biosynthesis; L-leucine from 3-methyl-2-oxobutanoate: step 3/4. In terms of biological role, catalyzes the oxidation of 3-carboxy-2-hydroxy-4-methylpentanoate (3-isopropylmalate) to 3-carboxy-4-methyl-2-oxopentanoate. The product decarboxylates to 4-methyl-2 oxopentanoate. The polypeptide is 3-isopropylmalate dehydrogenase (Vibrio vulnificus (strain CMCP6)).